Reading from the N-terminus, the 215-residue chain is Pyrrolidone-carboxylate peptidase (215 aa).

Catalysis depends on residues glutamate 78, cysteine 141, and histidine 165.

It belongs to the peptidase C15 family. Homotetramer.

The protein localises to the cytoplasm. It catalyses the reaction Release of an N-terminal pyroglutamyl group from a polypeptide, the second amino acid generally not being Pro.. In terms of biological role, removes 5-oxoproline from various penultimate amino acid residues except L-proline. This Lacticaseibacillus paracasei (strain ATCC 334 / BCRC 17002 / CCUG 31169 / CIP 107868 / KCTC 3260 / NRRL B-441) (Lactobacillus paracasei) protein is Pyrrolidone-carboxylate peptidase.